The sequence spans 337 residues: tRNA N6-adenosine threonylcarbamoyltransferase (337 aa).

Positions 110 and 114 each coordinate Fe cation. Substrate is bound by residues 133 to 137 (LVSGK), Asp-166, Gly-179, and Asn-271. Asp-300 lines the Fe cation pocket.

The protein belongs to the KAE1 / TsaD family. Fe(2+) serves as cofactor.

The protein resides in the cytoplasm. It carries out the reaction L-threonylcarbamoyladenylate + adenosine(37) in tRNA = N(6)-L-threonylcarbamoyladenosine(37) in tRNA + AMP + H(+). Required for the formation of a threonylcarbamoyl group on adenosine at position 37 (t(6)A37) in tRNAs that read codons beginning with adenine. Is involved in the transfer of the threonylcarbamoyl moiety of threonylcarbamoyl-AMP (TC-AMP) to the N6 group of A37, together with TsaE and TsaB. TsaD likely plays a direct catalytic role in this reaction. The protein is tRNA N6-adenosine threonylcarbamoyltransferase of Buchnera aphidicola subsp. Schizaphis graminum (strain Sg).